A 318-amino-acid polypeptide reads, in one-letter code: Serine protease 41 (318 aa).

Positions 1–19 (MGARGALLLALLLARAGLG) are cleaved as a signal peptide. Positions 20 to 54 (KPGELGALQAGPGAARRPGGGGREEACGHREIHAL) are excised as a propeptide. The Peptidase S1 domain occupies 55–297 (VAGGVESARG…YFHWIRRVMS (243 aa)). Cys-80 and Cys-96 are disulfide-bonded. Active-site charge relay system residues include His-95 and Asp-147. 3 disulfides stabilise this stretch: Cys-181–Cys-255, Cys-215–Cys-234, and Cys-245–Cys-273. N-linked (GlcNAc...) asparagine glycosylation is present at Asn-211. Residue Ser-249 is the Charge relay system of the active site. The N-linked (GlcNAc...) asparagine glycan is linked to Asn-284. Ser-299 is lipidated: GPI-anchor amidated serine. A propeptide spans 300–318 (TPRPNPSQLLLLLALLWAP) (removed in mature form).

The protein belongs to the peptidase S1 family. In terms of processing, N-glycosylated.

Its subcellular location is the cell membrane. The protein is Serine protease 41 of Homo sapiens (Human).